The primary structure comprises 226 residues: Apoptosis regulator OPG045 (226 aa).

Belongs to the orthopoxvirus OPG045 family. Homodimer. Interacts with host pro-apoptotic protein BCL2L11 (via BH3 domain). Interacts with host NLRP1. Interacts with host BAK.

Its subcellular location is the host mitochondrion outer membrane. The protein resides in the host cytoplasm. Functionally, plays a role in evading host innate immune response by inhibiting host inflammasome activation. Interacts with and inhibits NLR-mediated interleukin-1 beta/IL1B production in infected cells. At the host mitochondria outer membrane, interacts with the BH3 domain of host BAK and prevents BAK from binding active BAX. In turn, host apoptosis is inhibited. This chain is Apoptosis regulator OPG045 (OPG045), found in Vaccinia virus (strain Copenhagen) (VACV).